A 1799-amino-acid polypeptide reads, in one-letter code: Bromodomain and WD repeat-containing protein 3 (1799 aa).

8 WD repeats span residues Ile-170–Thr-209, Arg-213–Leu-251, Ala-255–Trp-297, Arg-307–Leu-347, Glu-353–Tyr-393, Ser-400–Ser-452, Gln-456–Leu-495, and Arg-502–Phe-542. Ser-693 bears the Phosphoserine mark. The interval Lys-766–Met-912 is disordered. Basic residues predominate over residues Ser-784–His-794. Residues Thr-795 to Gln-816 are compositionally biased toward polar residues. Residues Glu-817–Thr-828 are compositionally biased toward acidic residues. The span at Ser-845–Asp-858 shows a compositional bias: low complexity. Over residues Arg-875–Ser-884 the composition is skewed to polar residues. Residues Ser-884 and Ser-885 each carry the phosphoserine modification. Over residues Lys-897–Gly-907 the composition is skewed to basic residues. Residues Trp-1136–Gln-1243 enclose the Bromo 1 domain. Disordered regions lie at residues Glu-1258–Gly-1291, Glu-1321–Pro-1366, Ile-1435–Ser-1482, and Ser-1517–Ala-1723. Over residues Pro-1260 to Ser-1276 the composition is skewed to acidic residues. One can recognise a Bromo 2 domain in the interval Cys-1298–Ile-1427. Positions Pro-1333 to Pro-1348 are enriched in low complexity. Basic residues predominate over residues Gln-1438–Arg-1450. 2 stretches are compositionally biased toward low complexity: residues Ser-1451 to Ser-1463 and Ser-1517 to Ser-1530. Phosphoserine occurs at positions 1574 and 1576. A compositionally biased stretch (basic and acidic residues) spans Gly-1584–Val-1596. Over residues Leu-1598–Glu-1623 the composition is skewed to low complexity. Basic and acidic residues predominate over residues Ser-1624 to Ser-1640. Composition is skewed to basic residues over residues Arg-1646 to Lys-1663 and Arg-1681 to Arg-1694. Residue Ser-1760 is modified to Phosphoserine.

In terms of biological role, plays a role in the regulation of cell morphology and cytoskeletal organization. Required in the control of cell shape. The protein is Bromodomain and WD repeat-containing protein 3 (Brwd3) of Mus musculus (Mouse).